A 366-amino-acid chain; its full sequence is N-methyltransferase fsqC (366 aa).

The signal sequence occupies residues 1–18 (MSSNVQDIRGWPPPFANA). N-linked (GlcNAc...) asparagine glycosylation is present at Asn270.

It belongs to the methyltransferase superfamily.

The protein operates within secondary metabolite biosynthesis. Functionally, N-methyltransferase; part of the gene cluster that mediates the biosynthesis of the isoquinoline alkaloids fumisoquin A, fumisoquin B and fumisoquin C; as well as small amounts of fumipyrrole as a shunt metabolite. The products of the cluster lead to a brown coloration and are important for growth and conidiation. The nonribosomal peptide synthetase-like protein fsqF, which lacks a canonical condensation domain, is required for addition of a serine-derived dehydroalanine moiety to activated tyrosine but is not essential for the subsequent steps leading to isoquinoline formation. A different enzyme, most likely the ATP-grasp enzyme fsqD, is responsible for activation of tyrosine. Three additional enzymes encoded by the fsq cluster, the N-methyltransferase fsqC, the phenol 2-monooxygenase fsqG and the FAD-dependent oxidase fsqB, catalyze the formation of the isoquinoline ring system in the fumisoquins. FsqB converts the fspF thiolation domain-bound (2S,4S,5S)-2-amino-6-(3,4-dihydroxyphenyl)-4-hydroxy-5-(methylamino)hexanoyl into isoquinoline. The cyclization most likely proceeds via a two-step mechanism, beginning with FAD-dependent oxidation of the methyl group to an iminium species followed by electrophilic attack on the deprotonated phenol. This Aspergillus fumigatus (strain ATCC MYA-4609 / CBS 101355 / FGSC A1100 / Af293) (Neosartorya fumigata) protein is N-methyltransferase fsqC.